The primary structure comprises 351 residues: 3-dehydroquinate synthase (351 aa).

NAD(+)-binding positions include 60–65 (DGEEYK), 94–98 (GVISD), 118–119 (TT), lysine 131, lysine 140, and 158–161 (FLKT). 3 residues coordinate Zn(2+): glutamate 173, histidine 239, and histidine 256.

This sequence belongs to the sugar phosphate cyclases superfamily. Dehydroquinate synthase family. The cofactor is Co(2+). Zn(2+) serves as cofactor. Requires NAD(+) as cofactor.

The protein resides in the cytoplasm. The catalysed reaction is 7-phospho-2-dehydro-3-deoxy-D-arabino-heptonate = 3-dehydroquinate + phosphate. Its pathway is metabolic intermediate biosynthesis; chorismate biosynthesis; chorismate from D-erythrose 4-phosphate and phosphoenolpyruvate: step 2/7. Its function is as follows. Catalyzes the conversion of 3-deoxy-D-arabino-heptulosonate 7-phosphate (DAHP) to dehydroquinate (DHQ). The polypeptide is 3-dehydroquinate synthase (Campylobacter jejuni subsp. doylei (strain ATCC BAA-1458 / RM4099 / 269.97)).